A 382-amino-acid chain; its full sequence is Protein farnesyltransferase subunit beta (382 aa).

5 PFTB repeats span residues 78–119 (CERA…CLCD), 129–170 (RDRL…SLVG), 178–219 (FEGT…ALLG), 226–268 (EIKL…VIVA), and 286–328 (PEKL…SSIA). (2E,6E)-farnesyl diphosphate is bound by residues 204 to 207 (HGGY) and 247 to 250 (RSNK). Positions 253 and 255 each coordinate Zn(2+). 256–259 (YSWW) contacts (2E,6E)-farnesyl diphosphate. H316 serves as a coordination point for Zn(2+).

Belongs to the protein prenyltransferase subunit beta family. Heterodimer of an alpha(cwp1) and a beta(cpp1) subunit. Zn(2+) serves as cofactor.

The catalysed reaction is L-cysteinyl-[protein] + (2E,6E)-farnesyl diphosphate = S-(2E,6E)-farnesyl-L-cysteinyl-[protein] + diphosphate. Catalyzes the transfer of a farnesyl moiety from farnesyl diphosphate to a cysteine at the fourth position from the C-terminus of several proteins. The beta(cpp1) subunit is responsible for peptide-binding. The polypeptide is Protein farnesyltransferase subunit beta (cpp1) (Schizosaccharomyces pombe (strain 972 / ATCC 24843) (Fission yeast)).